A 363-amino-acid chain; its full sequence is DNA replication and repair protein RecF (363 aa).

Residue 30–37 (GDNAQGKT) coordinates ATP.

The protein belongs to the RecF family.

It is found in the cytoplasm. The RecF protein is involved in DNA metabolism; it is required for DNA replication and normal SOS inducibility. RecF binds preferentially to single-stranded, linear DNA. It also seems to bind ATP. This is DNA replication and repair protein RecF from Lachnospira eligens (strain ATCC 27750 / DSM 3376 / VPI C15-48 / C15-B4) (Eubacterium eligens).